Here is a 127-residue protein sequence, read N- to C-terminus: DQDCLPGWSFYEGHCYKVFDVKKTWEDAEKFCTEQMSGGHLVSFHSSEEVDFMIKLASPILKFDLVWIGLSNFWRDCHWGWSDGVKLDYKAWSDKPNCYVAKTVDPQWLHRDCSRTYKFVCKSRVPR.

Cystine bridges form between cysteine 4–cysteine 15, cysteine 32–cysteine 121, and cysteine 98–cysteine 113. The C-type lectin domain maps to 11 to 122 (YEGHCYKVFD…CSRTYKFVCK (112 aa)).

In terms of assembly, heterodimer of subunits alpha and beta; disulfide-linked. In terms of tissue distribution, expressed by the venom gland.

It localises to the secreted. In terms of biological role, interferes with one step of hemostasis (modulation of platelet aggregation, or coagulation cascade, for example). This chain is Snaclec macrovipecetin subunit beta, found in Macrovipera lebetinus (Levantine viper).